We begin with the raw amino-acid sequence, 508 residues long: POTE ankyrin domain family member G (508 aa).

5 ANK repeats span residues 172–201 (QKRTALHLASANGNSEVVKLLLDRRCQLNI), 205–234 (KKRTALTKAVQCREDECALMLLEHGTDPNI), 238–267 (YGNTALHYAIYNEDKLMAKALLLYGADIES), 271–300 (HGLTPLLLGVHEQKQQVVKFLIKKKANLNA), and 304–333 (YGRTALILAVCCGSASIVSLLLEQNIDVSS). A compositionally biased stretch (polar residues) spans 367-376 (KVSSENSNPE). Residues 367–488 (KVSSENSNPE…QLSEEQNTGI (122 aa)) form a disordered region. Composition is skewed to basic and acidic residues over residues 377 to 392 (QDLKLTSEEESQRLKG) and 406 to 421 (EINKGGDRKVEEEMKK). A compositionally biased stretch (polar residues) spans 476–488 (TQKQLSEEQNTGI).

It belongs to the POTE family.

The protein is POTE ankyrin domain family member G (POTEG) of Homo sapiens (Human).